Reading from the N-terminus, the 549-residue chain is MEKGIKKYLPSLPFLACISDFPENHGTSRRSATVSLERVHELFTEHWLSNLKNRREKRQELAEEAVYCRSEMLSQRKLLAAVDFPQQLKNSPAKAKATHTSSGVTKEVRASKKYTSSNVEFPLVTDGKEKPVKSKQLRKNSVTEFEKPIETKKSKHRKSRNKFLDKSSGSMEIESWDNSTSDSIIESSSRLHESISLRENDIRSSDSKSVGWDDNSTGFRESSKSLDHTDTSMFMELDSNSDPQFRPKYQAKSSWFAPDDPEASWGNLDDGWGETNGSWSSTDDTKHYKNEWAESINLDNFNRPSQQEDYDKPKNTQVSRSSNHHRRYDSYHPDSRSDSYRSKREHYDNRDTGPRSKHLEKSSYVYNQNFEDRTHLSDHGAHFHLGNANDFNMQGSSRKRKASDRQRESRENELPTKKLNASDSHNPLASLTTDKNDLYINWLKSLSFFQTNSSCAEALVKVIPHYHNKLIDFSQVLQLVFSASEKFPIQENQPLPEQLMFLSNLEKQTPFAKAVGSSIYKLVTGKNLSLDFASQILKEASILEHKNEK.

5 disordered regions span residues 89 to 111, 126 to 184, 202 to 225, 298 to 361, and 381 to 430; these read KNSP…VRAS, DGKE…SDSI, IRSS…SSKS, LDNF…HLEK, and AHFH…PLAS. Polar residues predominate over residues 298 to 307; that stretch reads LDNFNRPSQQ. Composition is skewed to basic and acidic residues over residues 328 to 361 and 403 to 416; these read YDSY…HLEK and SDRQ…ELPT. A compositionally biased stretch (polar residues) spans 419 to 430; the sequence is LNASDSHNPLAS.

As to quaternary structure, ago1, chp1 and tas3 interact to form the core of the RNA-induced transcriptional silencing (RITS) complex. The RITS complex interacts with the RDRC complex via interaction between ago1 and hrr1. Clr4 has a role in mediating this interaction.

The protein resides in the nucleus. The protein localises to the cytoplasm. It is found in the cytoskeleton. Its subcellular location is the microtubule organizing center. It localises to the spindle pole body. Functionally, has a role in the RNA interference (RNAi) pathway which is important for heterochromatin formation and accurate chromosome segregation. A member of the RNA-induced transcriptional silencing (RITS) complex which is involved in the biosynthesis of dsRNA from primer siRNAs provided by the RNA-directed RNA polymerase (RDRC) complex. The chain is RNA-induced transcriptional silencing complex protein tas3 (tas3) from Schizosaccharomyces pombe (strain 972 / ATCC 24843) (Fission yeast).